Here is a 426-residue protein sequence, read N- to C-terminus: UDP-N-acetylglucosamine 1-carboxyvinyltransferase (426 aa).

22-23 (KN) contributes to the phosphoenolpyruvate binding site. Arg-93 is a binding site for UDP-N-acetyl-alpha-D-glucosamine. Residue Asp-117 is the Proton donor of the active site. Residues Asp-312 and Met-334 each coordinate UDP-N-acetyl-alpha-D-glucosamine.

Belongs to the EPSP synthase family. MurA subfamily.

It localises to the cytoplasm. The enzyme catalyses phosphoenolpyruvate + UDP-N-acetyl-alpha-D-glucosamine = UDP-N-acetyl-3-O-(1-carboxyvinyl)-alpha-D-glucosamine + phosphate. Its pathway is cell wall biogenesis; peptidoglycan biosynthesis. Cell wall formation. Adds enolpyruvyl to UDP-N-acetylglucosamine. In Treponema denticola (strain ATCC 35405 / DSM 14222 / CIP 103919 / JCM 8153 / KCTC 15104), this protein is UDP-N-acetylglucosamine 1-carboxyvinyltransferase.